Consider the following 245-residue polypeptide: E3 ubiquitin-protein ligase RNF138 (245 aa).

A2 carries the N-acetylalanine modification. The segment at 18–58 (CPVCQEVLKTPVRTTACQHVFCRKCFLTAMRESGAHCPLCR) adopts an RING-type zinc-finger fold. 4 residues coordinate Zn(2+): C86, C89, H101, and C105. Residues 86-105 (CRCCAKQIKFYRMRHHYKSC) form a C2HC RNF-type zinc finger. A disordered region spans residues 125–154 (QDSVGNSNRSETSTSDNTETYQENTSSSGH). Position 142 is a phosphothreonine (T142). 2 consecutive C2H2-type zinc fingers follow at residues 157 to 180 (FKCPLCQESNFTRQRLLDHCNSNH) and 187 to 215 (VTCPICVSLPWGDPSQITRNFVSHLNQRH). The UIM domain maps to 225 to 243 (LQLDEETQYQTAVEESFQV).

As to quaternary structure, interacts with NLK. Interacts with XRCC5/Ku80. Interacts with RBBP8/CtIP. In terms of processing, auto-ubiquitinated.

Its subcellular location is the chromosome. It catalyses the reaction S-ubiquitinyl-[E2 ubiquitin-conjugating enzyme]-L-cysteine + [acceptor protein]-L-lysine = [E2 ubiquitin-conjugating enzyme]-L-cysteine + N(6)-ubiquitinyl-[acceptor protein]-L-lysine.. It participates in protein modification; protein ubiquitination. In terms of biological role, E3 ubiquitin-protein ligase involved in DNA damage response by promoting DNA resection and homologous recombination. Recruited to sites of double-strand breaks following DNA damage and specifically promotes double-strand break repair via homologous recombination. Two different, non-exclusive, mechanisms have been proposed. According to a report, regulates the choice of double-strand break repair by favoring homologous recombination over non-homologous end joining (NHEJ): acts by mediating ubiquitination of XRCC5/Ku80, leading to remove the Ku complex from DNA breaks, thereby promoting homologous recombination. According to another report, cooperates with UBE2Ds E2 ubiquitin ligases (UBE2D1, UBE2D2, UBE2D3 or UBE2D4) to promote homologous recombination by mediating ubiquitination of RBBP8/CtIP. Together with NLK, involved in the ubiquitination and degradation of TCF/LEF. Also exhibits auto-ubiquitination activity in combination with UBE2K. May act as a negative regulator in the Wnt/beta-catenin-mediated signaling pathway. The protein is E3 ubiquitin-protein ligase RNF138 of Homo sapiens (Human).